A 125-amino-acid chain; its full sequence is Large ribosomal subunit protein eL22 (125 aa).

It belongs to the eukaryotic ribosomal protein eL22 family. As to quaternary structure, component of the large ribosomal subunit.

It is found in the cytoplasm. Its function is as follows. Component of the large ribosomal subunit. The ribosome is a large ribonucleoprotein complex responsible for the synthesis of proteins in the cell. The chain is Large ribosomal subunit protein eL22 (rpl22) from Gadus morhua (Atlantic cod).